The primary structure comprises 150 residues: Putative biopolymer transport protein ExbB-like 2 (150 aa).

Transmembrane regions (helical) follow at residues 5 to 25, 63 to 83, and 97 to 117; these read VDYGIIGFLIFLSVIVIAIAI, APYIGLLGTVMGIMLTFMDLG, and LALALKATGMGLLVAIPAIVI.

It belongs to the ExbB/TolQ family.

Its subcellular location is the cell inner membrane. This is Putative biopolymer transport protein ExbB-like 2 from Helicobacter pylori (strain ATCC 700392 / 26695) (Campylobacter pylori).